The sequence spans 465 residues: Cysteine--tRNA ligase (465 aa).

C29 contributes to the Zn(2+) binding site. Residues 31 to 41 carry the 'HIGH' region motif; it reads PTVYNYIHIGN. Positions 209, 234, and 238 each coordinate Zn(2+). Positions 266–270 match the 'KMSKS' region motif; that stretch reads KMSKS. K269 contributes to the ATP binding site. The residue at position 270 (S270) is a Phosphoserine.

The protein belongs to the class-I aminoacyl-tRNA synthetase family. As to quaternary structure, monomer. It depends on Zn(2+) as a cofactor.

It is found in the cytoplasm. It carries out the reaction tRNA(Cys) + L-cysteine + ATP = L-cysteinyl-tRNA(Cys) + AMP + diphosphate. This chain is Cysteine--tRNA ligase, found in Anoxybacillus flavithermus (strain DSM 21510 / WK1).